The following is a 255-amino-acid chain: Pimeloyl-[acyl-carrier protein] methyl ester esterase (255 aa).

The AB hydrolase-1 domain maps to 16-241; that stretch reads LVLLHGWGLN…AAHAPFISHP (226 aa). Residues Trp-22, 81–82, and 142–146 each bind substrate; these read SL and FLALQ. The active-site Nucleophile is the Ser-81. Active-site residues include Asp-206 and His-234. Position 234 (His-234) interacts with substrate.

This sequence belongs to the AB hydrolase superfamily. Carboxylesterase BioH family. As to quaternary structure, monomer.

Its subcellular location is the cytoplasm. It catalyses the reaction 6-carboxyhexanoyl-[ACP] methyl ester + H2O = 6-carboxyhexanoyl-[ACP] + methanol + H(+). The protein operates within cofactor biosynthesis; biotin biosynthesis. Functionally, the physiological role of BioH is to remove the methyl group introduced by BioC when the pimeloyl moiety is complete. It allows to synthesize pimeloyl-ACP via the fatty acid synthetic pathway through the hydrolysis of the ester bonds of pimeloyl-ACP esters. Also displays a weak thioesterase activity. Can form a complex with CoA, and may be involved in the condensation of CoA and pimelic acid into pimeloyl-CoA, a precursor in biotin biosynthesis. The sequence is that of Pimeloyl-[acyl-carrier protein] methyl ester esterase from Serratia marcescens.